The following is a 98-amino-acid chain: NADH-ubiquinone oxidoreductase chain 4L (98 aa).

3 helical membrane passes run 1–21 (MSMVYINIFLAFTLSFMGLLI), 29–49 (SLLCLEGMMLSLFVLMTVTIL), and 61–81 (IILLVFAACEAALGLSLLVMV).

The protein belongs to the complex I subunit 4L family. Core subunit of respiratory chain NADH dehydrogenase (Complex I) which is composed of 45 different subunits.

It is found in the mitochondrion inner membrane. It catalyses the reaction a ubiquinone + NADH + 5 H(+)(in) = a ubiquinol + NAD(+) + 4 H(+)(out). In terms of biological role, core subunit of the mitochondrial membrane respiratory chain NADH dehydrogenase (Complex I) which catalyzes electron transfer from NADH through the respiratory chain, using ubiquinone as an electron acceptor. Part of the enzyme membrane arm which is embedded in the lipid bilayer and involved in proton translocation. The chain is NADH-ubiquinone oxidoreductase chain 4L (MT-ND4L) from Taxidea taxus (American badger).